We begin with the raw amino-acid sequence, 475 residues long: Ribulose bisphosphate carboxylase large chain (475 aa).

Residues 1–2 (MS) constitute a propeptide that is removed on maturation. At P3 the chain carries N-acetylproline. K14 is modified (N6,N6,N6-trimethyllysine). Positions 123 and 173 each coordinate substrate. The active-site Proton acceptor is K175. Residue K177 coordinates substrate. K201, D203, and E204 together coordinate Mg(2+). K201 carries the N6-carboxylysine modification. H294 serves as the catalytic Proton acceptor. Residues R295, H327, and S379 each coordinate substrate.

This sequence belongs to the RuBisCO large chain family. Type I subfamily. Heterohexadecamer of 8 large chains and 8 small chains; disulfide-linked. The disulfide link is formed within the large subunit homodimers. Requires Mg(2+) as cofactor. Post-translationally, the disulfide bond which can form in the large chain dimeric partners within the hexadecamer appears to be associated with oxidative stress and protein turnover.

Its subcellular location is the plastid. The protein localises to the chloroplast. It carries out the reaction 2 (2R)-3-phosphoglycerate + 2 H(+) = D-ribulose 1,5-bisphosphate + CO2 + H2O. It catalyses the reaction D-ribulose 1,5-bisphosphate + O2 = 2-phosphoglycolate + (2R)-3-phosphoglycerate + 2 H(+). Functionally, ruBisCO catalyzes two reactions: the carboxylation of D-ribulose 1,5-bisphosphate, the primary event in carbon dioxide fixation, as well as the oxidative fragmentation of the pentose substrate in the photorespiration process. Both reactions occur simultaneously and in competition at the same active site. The sequence is that of Ribulose bisphosphate carboxylase large chain from Chara vulgaris (Common stonewort).